The chain runs to 740 residues: NAD(P)H-quinone oxidoreductase subunit 5, chloroplastic (740 aa).

Helical transmembrane passes span 9 to 29, 40 to 60, 89 to 109, 125 to 145, 147 to 167, 185 to 205, 219 to 239, 258 to 278, 286 to 306, 327 to 347, 354 to 374, 396 to 416, 425 to 445, 543 to 563, 602 to 622, and 717 to 737; these read WIIP…LILF, WAFQ…YLSI, IDPL…MVLI, FAYM…SNLI, IYIF…FWFT, GDFG…SFEF, NEVD…GAVA, TPIS…FLVA, VIPY…LLGA, LGYM…FHLI, ALLF…VGYS, ITFL…CFWS, WLYS…TAFY, LFPI…GIPF, VLSV…YKPI, and SYLF…YLLF.

This sequence belongs to the complex I subunit 5 family. As to quaternary structure, NDH is composed of at least 16 different subunits, 5 of which are encoded in the nucleus.

Its subcellular location is the plastid. The protein localises to the chloroplast thylakoid membrane. It catalyses the reaction a plastoquinone + NADH + (n+1) H(+)(in) = a plastoquinol + NAD(+) + n H(+)(out). The enzyme catalyses a plastoquinone + NADPH + (n+1) H(+)(in) = a plastoquinol + NADP(+) + n H(+)(out). In terms of biological role, NDH shuttles electrons from NAD(P)H:plastoquinone, via FMN and iron-sulfur (Fe-S) centers, to quinones in the photosynthetic chain and possibly in a chloroplast respiratory chain. The immediate electron acceptor for the enzyme in this species is believed to be plastoquinone. Couples the redox reaction to proton translocation, and thus conserves the redox energy in a proton gradient. This chain is NAD(P)H-quinone oxidoreductase subunit 5, chloroplastic (ndhF), found in Nicotiana tomentosiformis (Tobacco).